Reading from the N-terminus, the 492-residue chain is Solute carrier family 2, facilitated glucose transporter member 1 (492 aa).

Met1 bears the N-acetylmethionine mark. Over 1 to 11 (MEPSSKKLTGR) the chain is Cytoplasmic. The helical transmembrane segment at 12-33 (LMLAVGGAVLGSLQFGYNTGVI) threads the bilayer. At 34-66 (NAPQKVIEEFYNQTWLHRYGESISPATLTTLWS) the chain is on the extracellular side. Asn45 carries an N-linked (GlcNAc...) asparagine glycan. The chain crosses the membrane as a helical span at residues 67–87 (LSVAIFSVGGMIGSFSVGLFV). Topologically, residues 88–90 (NRF) are cytoplasmic. The chain crosses the membrane as a helical span at residues 91–112 (GRRNSMLMMNLLAFISAVLMGF). Topologically, residues 113–120 (SKLGKSFE) are extracellular. The helical transmembrane segment at 121–144 (MLILGRFIIGVYCGLTTGFVPMYV) threads the bilayer. Residues 145–155 (GEVSPTALRGA) lie on the Cytoplasmic side of the membrane. The helical transmembrane segment at 156 to 176 (LGTLHQLGIVVGILIAQVFGL) threads the bilayer. Residue Gln161 participates in D-glucose binding. The Extracellular segment spans residues 177–185 (DSIMGNEEL). Residues 186 to 206 (WPLLLSVIFIPALLQCVLLPF) form a helical membrane-spanning segment. The Cytoplasmic segment spans residues 207–271 (CPESPRFLLI…LFRSAAYRQP (65 aa)). Ser226 bears the Phosphoserine mark. A helical membrane pass occupies residues 272–293 (ILIAVVLQLSQQLSGINAVFYY). D-glucose is bound by residues 282–283 (QQ) and Asn288. The Extracellular segment spans residues 294-306 (STSIFEKAGVQQP). The chain crosses the membrane as a helical span at residues 307 to 328 (VYATIGSGIVNTAFTVVSLFVV). Asn317 serves as a coordination point for D-glucose. The Cytoplasmic portion of the chain corresponds to 329–334 (ERAGRR). The helical transmembrane segment at 335-355 (TLHLIGLAGMAGCAVLMTIAL) threads the bilayer. Topologically, residues 356–365 (ALLEQLPWMS) are extracellular. The helical transmembrane segment at 366-388 (YLSIVAIFGFVAFFEVGPGPIPW) threads the bilayer. D-glucose-binding residues include Glu380 and Trp388. Residues 389–401 (FIVAELFSQGPRP) are Cytoplasmic-facing. The helical transmembrane segment at 402–422 (AAIAVAGFSNWTSNFIVGMCF) threads the bilayer. The Extracellular portion of the chain corresponds to 423 to 429 (QYVEQLC). A helical membrane pass occupies residues 430 to 450 (GPYVFIIFTVLLVLFFIFTYF). Ser465 carries the post-translational modification Phosphoserine. The interval 468-492 (RQGGASQSDKTPEELFHPLGADSQV) is disordered. A Phosphothreonine modification is found at Thr478. Ser490 carries the post-translational modification Phosphoserine.

This sequence belongs to the major facilitator superfamily. Sugar transporter (TC 2.A.1.1) family. Glucose transporter subfamily. Found in a complex with ADD2, DMTN and SLC2A1. Interacts (via C-terminus cytoplasmic region) with DMTN. Interacts with SNX27; the interaction is required when endocytosed to prevent degradation in lysosomes and promote recycling to the plasma membrane. Interacts with GIPC (via PDZ domain). Interacts with STOM. Interacts with SGTA (via Gln-rich region). Interacts with BSG. Interacts with SMIM43; the interaction may promote SLC2A1-mediated glucose transport to meet the energy needs of mesendoderm differentiation. Phosphorylation at Ser-226 by PKC promotes glucose uptake by increasing cell membrane localization.

The protein resides in the cell membrane. Its subcellular location is the photoreceptor inner segment. The enzyme catalyses D-glucose(out) = D-glucose(in). The uptake of glucose is inhibited by cytochalasin B. Glucose uptake is increased in response to phorbol ester 12-O-tetradecanoylphorbol-13-acetate (TPA) treatment: TPA-induced glucose uptake requires phosphorylation at Ser-226. In terms of biological role, facilitative glucose transporter, which is responsible for constitutive or basal glucose uptake. Has a very broad substrate specificity; can transport a wide range of aldoses including both pentoses and hexoses. Most important energy carrier of the brain: present at the blood-brain barrier and assures the energy-independent, facilitative transport of glucose into the brain. In association with BSG and NXNL1, promotes retinal cone survival by increasing glucose uptake into photoreceptors. Required for mesendoderm differentiation. The protein is Solute carrier family 2, facilitated glucose transporter member 1 of Sus scrofa (Pig).